The sequence spans 271 residues: 2-aminophenol 1,6-dioxygenase subunit alpha (271 aa).

This sequence belongs to the LigB/MhpB extradiol dioxygenase family. In terms of assembly, the APD complex is a heterotetramer of 2 alpha (CnbCa) and 2 beta (CnbCb) subunits.

The protein operates within xenobiotic degradation; nitrobenzene degradation. It functions in the pathway xenobiotic degradation; 4-chloronitrobenzene degradation. Component of the 2-aminophenol 1,6-dioxygenase (APD) complex that catalyzes the ring fission of 2-aminophenol to produce 2-aminomuconic semialdehyde. CnbCa may have a role in the stability of the complex. The complex is also active on other substrates such as 2-amino-5-chlorophenol (68% activity), protocatechuate (33% activity) and catechol (5% activity). Both 2-aminophenol and 2-amino-5-cholorophenol are likely native substrates for this dioxygenase which is involved in the reductive degradation pathway of both nitrobenzene (NB) and 4-chloronitrobenzene (4-CNB), allowing C.testosteroni strain CNB-1 to grow on these compounds as sole source of carbon, nitrogen, and energy. The protein is 2-aminophenol 1,6-dioxygenase subunit alpha of Comamonas testosteroni (Pseudomonas testosteroni).